A 340-amino-acid chain; its full sequence is Mitochondrial glycine transporter (340 aa).

Solcar repeat units follow at residues 23–108 (PKTL…ARNG), 128–218 (LSPF…FKND), and 237–325 (RSTI…LIKS). The next 6 membrane-spanning stretches (helical) occupy residues 29 to 54 (LISG…TRLQ), 83 to 109 (GALP…RNGI), 134 to 159 (LATG…TRYE), 193 to 216 (GSFA…ELFK), 241 to 267 (INTS…KTRL), and 300 to 318 (GLSL…SWCI).

It belongs to the mitochondrial carrier (TC 2.A.29) family. SLC25A38 subfamily.

It localises to the mitochondrion inner membrane. It carries out the reaction glycine(in) = glycine(out). In terms of biological role, mitochondrial glycine transporter that imports glycine into the mitochondrial matrix. Plays an important role in providing glycine for the first enzymatic step in heme biosynthesis, the condensation of glycine with succinyl-CoA to produce 5-aminolevulinate (ALA) in the mitochondrial matrix. In Debaryomyces hansenii (strain ATCC 36239 / CBS 767 / BCRC 21394 / JCM 1990 / NBRC 0083 / IGC 2968) (Yeast), this protein is Mitochondrial glycine transporter.